The following is a 245-amino-acid chain: MDVGPSSLPHLGLKLLLLLLLLPLRGQANTGCYGIPGMPGLPGAPGKDGYDGLPGPKGEPGIPAIPGIRGPKGQKGEPGLPGHPGKNGPMGPPGMPGVPGPMGIPGEPGEEGRYKQKFQSVFTVTRQTHQPPAPNSLIRFNAVLTNPQGDYDTSTGKFTCKVPGLYYFVYHASHTANLCVLLYRSGVKVVTFCGHTSKTNQVNSGGVLLRLQVGEEVWLAVNDYYDMVGIQGSDSVFSGFLLFPD.

Positions 1-28 (MDVGPSSLPHLGLKLLLLLLLLPLRGQA) are cleaved as a signal peptide. Residues 31–112 (GCYGIPGMPG…GIPGEPGEEG (82 aa)) form the Collagen-like domain. 6 positions are modified to 4-hydroxyproline: Pro36, Pro39, Pro42, Pro45, Pro54, and Pro63. The interval 45-113 (PGKDGYDGLP…IPGEPGEEGR (69 aa)) is disordered. Positions 54–71 (PGPKGEPGIPAIPGIRGP) are enriched in low complexity. Lys75 is subject to 5-hydroxylysine. Lys75 carries an O-linked (Gal...) hydroxylysine glycan. 5 positions are modified to 4-hydroxyproline: Pro81, Pro93, Pro96, Pro99, and Pro105. Residues 90–99 (MGPPGMPGVP) are compositionally biased toward pro residues. The C1q domain occupies 115-245 (KQKFQSVFTV…VFSGFLLFPD (131 aa)). Cysteines 179 and 193 form a disulfide.

Core component of the complement C1 complex, a calcium-dependent complex composed of 1 molecule of the C1Q subcomplex, 2 molecules of C1R and 2 molecules of C1S. The C1Q subcomplex is composed 18 subunits: 3 chains of C1QA, C1QB, and C1QC trimerize to form 6 collagen-like triple helices connected to six globular ligand-recognition modules (C1q domain). In terms of processing, O-linked glycans consist of Glc-Gal disaccharides bound to the oxygen atom of post-translationally added hydroxyl groups.

Its subcellular location is the secreted. It is found in the cell surface. With respect to regulation, the C1Q subcomplex is inhibited by sulfated molecules, such as triterpenoid sulfates, heparan sulfate, or chondroitin sulfates. Its function is as follows. Core component of the complement C1 complex, a multiprotein complex that initiates the classical pathway of the complement system, a cascade of proteins that leads to phagocytosis and breakdown of pathogens and signaling that strengthens the adaptive immune system. The classical complement pathway is initiated by the C1Q subcomplex of the C1 complex, which specifically binds IgG or IgM immunoglobulins complexed with antigens, forming antigen-antibody complexes on the surface of pathogens: C1QA, together with C1QB and C1QC, specifically recognizes and binds the Fc regions of IgG or IgM via its C1q domain. Immunoglobulin-binding activates the proenzyme C1R, which cleaves C1S, initiating the proteolytic cascade of the complement system. The C1Q subcomplex is activated by a hexamer of IgG complexed with antigens, while it is activated by a pentameric IgM. The C1Q subcomplex also recognizes and binds phosphatidylserine exposed on the surface of cells undergoing programmed cell death, possibly promoting activation of the complement system. The chain is Complement C1q subcomponent subunit C from Homo sapiens (Human).